The primary structure comprises 322 residues: Probable heme-iron transport system permease protein IsdF (322 aa).

Transmembrane regions (helical) follow at residues 9–29 (LLFLCLLVILIATAYISFVTG), 61–81 (ILIALMVGAMLAVSGALLQAA), 89–109 (ANIIGVSSGALIMRALCMLFI), 114–134 (FYLPLLSFIGGLIPFLIIILL), 143–163 (VSMILVGVALFVLLNGVLEIL), 179–199 (IWSDVYILAVSALLGLILTLL), 233–253 (VFLASATVAIVGQLAFLGIIV), 267–287 (VLIPFSTVIGAWLLLVADLLG), and 294–314 (LEIPANAILMIVGGPMLIYLI).

This sequence belongs to the binding-protein-dependent transport system permease family. FecCD subfamily.

It is found in the cell membrane. In terms of biological role, part of the binding-protein-dependent transport system for heme-iron. Responsible for the translocation of the substrate across the membrane. The sequence is that of Probable heme-iron transport system permease protein IsdF (isdF) from Staphylococcus aureus (strain Mu3 / ATCC 700698).